A 477-amino-acid polypeptide reads, in one-letter code: Glycogen synthase (477 aa).

K16 lines the ADP-alpha-D-glucose pocket.

The protein belongs to the glycosyltransferase 1 family. Bacterial/plant glycogen synthase subfamily.

It carries out the reaction [(1-&gt;4)-alpha-D-glucosyl](n) + ADP-alpha-D-glucose = [(1-&gt;4)-alpha-D-glucosyl](n+1) + ADP + H(+). It functions in the pathway glycan biosynthesis; glycogen biosynthesis. Its function is as follows. Synthesizes alpha-1,4-glucan chains using ADP-glucose. In Oceanobacillus iheyensis (strain DSM 14371 / CIP 107618 / JCM 11309 / KCTC 3954 / HTE831), this protein is Glycogen synthase.